The following is a 938-amino-acid chain: Glutamate receptor ionotropic, NMDA 1 (938 aa).

An N-terminal signal peptide occupies residues 1–18; it reads MSTMHLLTFALLFSCSFA. Residues 19–559 are Extracellular-facing; the sequence is RAACDPKIVN…TLDSFMQPFQ (541 aa). N-linked (GlcNAc...) asparagine glycosylation is found at N61, N203, N239, N276, N300, N350, N368, N440, N471, and N491. A disulfide bond links C79 and C308. 2 disulfides stabilise this stretch: C420–C454 and C436–C455. Glycine contacts are provided by P516, T518, and R523. A helical transmembrane segment spans residues 560–580; the sequence is STLWLLVGLSVHVVAVMLYLL. Residues 581 to 602 are Cytoplasmic-facing; sequence DRFSPFGRFKVNSEEEEEDALT. Residues 603 to 624 constitute an intramembrane region (discontinuously helical); that stretch reads LSSAMWFSWGVLLNSGIGEGAP. The pore-forming stretch occupies residues 603-624; the sequence is LSSAMWFSWGVLLNSGIGEGAP. The Cytoplasmic portion of the chain corresponds to 625–630; it reads RSFSAR. A helical transmembrane segment spans residues 631-647; that stretch reads ILGMVWAGFAMIIVASY. At 648–812 the chain is on the extracellular side; it reads TANLAAFLVL…NAPATLTFEN (165 aa). A glycan (N-linked (GlcNAc...) asparagine) is linked at N674. Glycine-binding residues include S688 and D732. A disulfide bond links C744 and C798. N771 carries N-linked (GlcNAc...) asparagine glycosylation. Residues 813 to 833 traverse the membrane as a helical segment; the sequence is MAGVFMLVAGGIVAGIFLIFI. Topologically, residues 834 to 938 are cytoplasmic; it reads EIAYKRHKDA…LQLCSRHRES (105 aa). At S889 the chain carries Phosphoserine; by PKC. A disordered region spans residues 889 to 938; that stretch reads SSFKRRRSSKDTSTGGGRGALQNQKDTVLPRRAIEREEGQLQLCSRHRES. A Phosphoserine modification is found at S890. A phosphoserine; by PKC mark is found at S896 and S897. Basic and acidic residues predominate over residues 916–927; sequence VLPRRAIEREEG.

Belongs to the glutamate-gated ion channel (TC 1.A.10.1) family. NR1/GRIN1 subfamily. Heterotetramer; the NMDAR subunits are modular and harbor tiered domains that function in concert to regulate opening and closing of the cation-selective ion channel pore. Forms heterotetrameric channels composed of two GluN1/zeta subunits (GRIN1), and two identical GluN2/epsilon subunits (GRIN2A, GRIN2B, GRIN2C or GRIN2D) or GluN3 subunits (GRIN3A or GRIN3B) (in vitro). Can also form heterotetrameric channels that contain at least two GluN1 subunits and at least two different GluN2 subunits (or a combination of one GluN2 and one GluN3 subunits) (in vitro). In vivo, the subunit composition may vary in function of the expression levels of the different subunits. Found in a complex with GRIN2A or GRIN2B, GRIN3A and PPP2CB. Found in a complex with GRIN2A or GRIN2B and GRIN3B. Interacts with SNX27 (via PDZ domain); the interaction is required for recycling to the plasma membrane when endocytosed and prevent degradation in lysosomes. Interacts with DLG4 and MPDZ. Interacts with LRFN1 and LRFN2. Interacts with MYZAP. Found in a complex with DLG4 and PRR7. Found in a complex with GRIN2B and PRR7. Interacts with PRR7; the interaction is reduced following NMDA receptor activity. Post-translationally, NMDA is probably regulated by C-terminal phosphorylation of an isoform of GRIN1 by PKC. Dephosphorylated on Ser-897 probably by protein phosphatase 2A (PPP2CB). Its phosphorylated state is influenced by the formation of the NMDAR-PPP2CB complex and the NMDAR channel activity. In terms of tissue distribution, detected in brain (at protein level). Detected in brain.

It is found in the cell membrane. Its subcellular location is the postsynaptic cell membrane. The protein resides in the postsynaptic density membrane. It localises to the synaptic cell membrane. It carries out the reaction Ca(2+)(in) = Ca(2+)(out). The enzyme catalyses Na(+)(in) = Na(+)(out). It catalyses the reaction K(+)(in) = K(+)(out). In terms of biological role, component of N-methyl-D-aspartate (NMDA) receptors (NMDARs) that function as heterotetrameric, ligand-gated cation channels with high calcium permeability and voltage-dependent block by Mg(2+). NMDARs participate in synaptic plasticity for learning and memory formation by contributing to the long-term potentiation (LTP). Channel activation requires binding of the neurotransmitter L-glutamate to the GluN2 subunit, glycine or D-serine binding to the GluN1 subunit, plus membrane depolarization to eliminate channel inhibition by Mg(2+). NMDARs mediate simultaneously the potasium efflux and the influx of calcium and sodium. Each GluN2 or GluN3 subunit confers differential attributes to channel properties, including activation, deactivation and desensitization kinetics, pH sensitivity, Ca2(+) permeability, and binding to allosteric modulators. This is Glutamate receptor ionotropic, NMDA 1 from Mus musculus (Mouse).